Reading from the N-terminus, the 251-residue chain is Triosephosphate isomerase (251 aa).

9-11 contacts substrate; the sequence is NWK. Catalysis depends on histidine 95, which acts as the Electrophile. Glutamate 167 serves as the catalytic Proton acceptor. Substrate is bound by residues glycine 173, serine 213, and 234 to 235; that span reads GG.

It belongs to the triosephosphate isomerase family. In terms of assembly, homodimer.

Its subcellular location is the cytoplasm. The enzyme catalyses D-glyceraldehyde 3-phosphate = dihydroxyacetone phosphate. The protein operates within carbohydrate biosynthesis; gluconeogenesis. It functions in the pathway carbohydrate degradation; glycolysis; D-glyceraldehyde 3-phosphate from glycerone phosphate: step 1/1. In terms of biological role, involved in the gluconeogenesis. Catalyzes stereospecifically the conversion of dihydroxyacetone phosphate (DHAP) to D-glyceraldehyde-3-phosphate (G3P). The sequence is that of Triosephosphate isomerase from Carboxydothermus hydrogenoformans (strain ATCC BAA-161 / DSM 6008 / Z-2901).